An 807-amino-acid chain; its full sequence is Potassium transporter 9 (807 aa).

Over Met-1 to Arg-59 the chain is Cytoplasmic. Residues Leu-60–Phe-80 form a helical membrane-spanning segment. Topologically, residues Tyr-81 to Gly-96 are extracellular. A helical membrane pass occupies residues Ala-97–Val-117. Over Cys-118–Leu-185 the chain is Cytoplasmic. The helical transmembrane segment at Leu-186–Ile-206 threads the bilayer. The Extracellular segment spans residues Ser-207–Asp-225. Residues Ile-226 to Thr-246 form a helical membrane-spanning segment. At Asp-247 to Lys-248 the chain is on the cytoplasmic side. The chain crosses the membrane as a helical span at residues Val-249–Met-269. Over Tyr-270 to Gly-299 the chain is Extracellular. A helical transmembrane segment spans residues Trp-300 to Ile-320. Residues Ala-321–Tyr-322 are Cytoplasmic-facing. A helical transmembrane segment spans residues Phe-323–Ala-343. The Extracellular portion of the chain corresponds to Tyr-344–Ser-369. Residues Val-370–Ile-390 traverse the membrane as a helical segment. The Cytoplasmic segment spans residues Ser-391–Lys-417. A helical transmembrane segment spans residues Phe-418–Val-438. The Extracellular segment spans residues Thr-439–Thr-454. A helical transmembrane segment spans residues Ala-455–Trp-475. At His-476–Leu-481 the chain is on the cytoplasmic side. A helical membrane pass occupies residues Val-482–Phe-502. Residues Lys-503 to Gly-507 are Extracellular-facing. A helical membrane pass occupies residues Gly-508 to Ala-528. Residues Thr-529 to Val-807 are Cytoplasmic-facing.

It belongs to the HAK/KUP transporter (TC 2.A.72.3) family.

It localises to the cell membrane. Its function is as follows. Putative potassium transporter. This Arabidopsis thaliana (Mouse-ear cress) protein is Potassium transporter 9 (POT9).